A 301-amino-acid chain; its full sequence is 4-hydroxy-tetrahydrodipicolinate synthase (301 aa).

Position 57 (Thr-57) interacts with pyruvate. Catalysis depends on Tyr-145, which acts as the Proton donor/acceptor. The active-site Schiff-base intermediate with substrate is Lys-173. Ile-213 is a pyruvate binding site.

It belongs to the DapA family. Homotetramer; dimer of dimers.

The protein resides in the cytoplasm. The catalysed reaction is L-aspartate 4-semialdehyde + pyruvate = (2S,4S)-4-hydroxy-2,3,4,5-tetrahydrodipicolinate + H2O + H(+). The protein operates within amino-acid biosynthesis; L-lysine biosynthesis via DAP pathway; (S)-tetrahydrodipicolinate from L-aspartate: step 3/4. Catalyzes the condensation of (S)-aspartate-beta-semialdehyde [(S)-ASA] and pyruvate to 4-hydroxy-tetrahydrodipicolinate (HTPA). This is 4-hydroxy-tetrahydrodipicolinate synthase from Corynebacterium diphtheriae (strain ATCC 700971 / NCTC 13129 / Biotype gravis).